The primary structure comprises 495 residues: UDP-N-acetylmuramate--L-alanine ligase (495 aa).

122-128 provides a ligand contact to ATP; it reads GTHGKTT.

This sequence belongs to the MurCDEF family.

It is found in the cytoplasm. The catalysed reaction is UDP-N-acetyl-alpha-D-muramate + L-alanine + ATP = UDP-N-acetyl-alpha-D-muramoyl-L-alanine + ADP + phosphate + H(+). It functions in the pathway cell wall biogenesis; peptidoglycan biosynthesis. Cell wall formation. This chain is UDP-N-acetylmuramate--L-alanine ligase, found in Mycobacterium leprae (strain TN).